The chain runs to 346 residues: Probable electron transfer flavoprotein subunit alpha, mitochondrial (346 aa).

285 to 313 (LYVAVGISGAIQHLAGMKESKMIVAINKD) serves as a coordination point for FAD.

Belongs to the ETF alpha-subunit/FixB family. As to quaternary structure, heterodimer of an alpha and a beta subunit. The cofactor is FAD.

It is found in the mitochondrion matrix. The electron transfer flavoprotein serves as a specific electron acceptor for several dehydrogenases, including five acyl-CoA dehydrogenases, glutaryl-CoA and sarcosine dehydrogenase. It transfers the electrons to the main mitochondrial respiratory chain via ETF-ubiquinone oxidoreductase (ETF dehydrogenase). The protein is Probable electron transfer flavoprotein subunit alpha, mitochondrial (ETF1) of Cryptococcus neoformans var. grubii (Filobasidiella neoformans var. grubii).